The primary structure comprises 173 residues: Cyclic pyranopterin monophosphate synthase (173 aa).

Substrate is bound by residues 75–77 (MCH) and 117–118 (ME). The active site involves Asp-132. The tract at residues 152–173 (SGGKSGHYQRENSSVGGFANEQ) is disordered. Residues 162–173 (ENSSVGGFANEQ) show a composition bias toward polar residues.

This sequence belongs to the MoaC family. In terms of assembly, homohexamer; trimer of dimers.

The catalysed reaction is (8S)-3',8-cyclo-7,8-dihydroguanosine 5'-triphosphate = cyclic pyranopterin phosphate + diphosphate. The protein operates within cofactor biosynthesis; molybdopterin biosynthesis. In terms of biological role, catalyzes the conversion of (8S)-3',8-cyclo-7,8-dihydroguanosine 5'-triphosphate to cyclic pyranopterin monophosphate (cPMP). The sequence is that of Cyclic pyranopterin monophosphate synthase from Geobacillus sp. (strain WCH70).